Here is a 400-residue protein sequence, read N- to C-terminus: NADH-quinone oxidoreductase subunit D (400 aa).

It belongs to the complex I 49 kDa subunit family. In terms of assembly, NDH-1 is composed of 14 different subunits. Subunits NuoB, C, D, E, F, and G constitute the peripheral sector of the complex.

Its subcellular location is the cell inner membrane. The enzyme catalyses a quinone + NADH + 5 H(+)(in) = a quinol + NAD(+) + 4 H(+)(out). Its function is as follows. NDH-1 shuttles electrons from NADH, via FMN and iron-sulfur (Fe-S) centers, to quinones in the respiratory chain. The immediate electron acceptor for the enzyme in this species is believed to be a menaquinone. Couples the redox reaction to proton translocation (for every two electrons transferred, four hydrogen ions are translocated across the cytoplasmic membrane), and thus conserves the redox energy in a proton gradient. The chain is NADH-quinone oxidoreductase subunit D from Chlorobaculum tepidum (strain ATCC 49652 / DSM 12025 / NBRC 103806 / TLS) (Chlorobium tepidum).